The following is a 426-amino-acid chain: Putative phosphate permease TC_0064 (426 aa).

Transmembrane regions (helical) follow at residues methionine 1 to alanine 21, leucine 37 to leucine 57, valine 83 to phenylalanine 103, glycine 104 to leucine 124, valine 140 to isoleucine 160, alanine 183 to valine 203, valine 207 to valine 227, leucine 260 to alanine 280, valine 309 to glycine 329, phenylalanine 365 to alanine 385, and isoleucine 399 to leucine 419.

It belongs to the inorganic phosphate transporter (PiT) (TC 2.A.20) family.

It localises to the cell membrane. In terms of biological role, potential transporter for phosphate. The sequence is that of Putative phosphate permease TC_0064 from Chlamydia muridarum (strain MoPn / Nigg).